Reading from the N-terminus, the 70-residue chain is Waprin-Thr1 (70 aa).

The signal sequence occupies residues 1-19; sequence MKARLLLLSVVILVGMVSA. A WAP domain is found at 20 to 70; that stretch reads ENEKAGSCPDVNQPIPPLGLCRNMCESDSGCPNNEKCCKNGCGFMTCSRPR. 4 cysteine pairs are disulfide-bonded: C27–C57, C40–C61, C44–C56, and C50–C66.

The protein belongs to the venom waprin family. In terms of tissue distribution, expressed by the venom gland.

The protein localises to the secreted. Damages membranes of susceptible bacteria. Has no hemolytic activity. Not toxic to mice. Does not inhibit the proteinases elastase and cathepsin G. The protein is Waprin-Thr1 of Thrasops jacksonii (Jackson's black tree snake).